The following is a 132-amino-acid chain: Small ribosomal subunit protein uS12 (132 aa).

At D89 the chain carries 3-methylthioaspartic acid.

Belongs to the universal ribosomal protein uS12 family. Part of the 30S ribosomal subunit. Contacts proteins S8 and S17. May interact with IF1 in the 30S initiation complex.

With S4 and S5 plays an important role in translational accuracy. In terms of biological role, interacts with and stabilizes bases of the 16S rRNA that are involved in tRNA selection in the A site and with the mRNA backbone. Located at the interface of the 30S and 50S subunits, it traverses the body of the 30S subunit contacting proteins on the other side and probably holding the rRNA structure together. The combined cluster of proteins S8, S12 and S17 appears to hold together the shoulder and platform of the 30S subunit. This Campylobacter curvus (strain 525.92) protein is Small ribosomal subunit protein uS12.